The sequence spans 685 residues: Translation initiation factor IF-2 (685 aa).

One can recognise a tr-type G domain in the interval 185–354 (KRPPVVTVMG…LLTAEMQELK (170 aa)). Residues 194–201 (GHVDHGKT) are G1. 194–201 (GHVDHGKT) contacts GTP. The segment at 219–223 (GITQH) is G2. Residues 240–243 (DTPG) form a G3 region. GTP is bound by residues 240–244 (DTPGH) and 294–297 (NKMD). Residues 294–297 (NKMD) form a G4 region. Residues 330-332 (SAH) are G5.

Belongs to the TRAFAC class translation factor GTPase superfamily. Classic translation factor GTPase family. IF-2 subfamily.

Its subcellular location is the cytoplasm. Its function is as follows. One of the essential components for the initiation of protein synthesis. Protects formylmethionyl-tRNA from spontaneous hydrolysis and promotes its binding to the 30S ribosomal subunits. Also involved in the hydrolysis of GTP during the formation of the 70S ribosomal complex. The polypeptide is Translation initiation factor IF-2 (Clostridium tetani (strain Massachusetts / E88)).